A 365-amino-acid chain; its full sequence is DNA replication and repair protein RecF (365 aa).

30-37 (GANGQGKT) serves as a coordination point for ATP.

Belongs to the RecF family.

It is found in the cytoplasm. Its function is as follows. The RecF protein is involved in DNA metabolism; it is required for DNA replication and normal SOS inducibility. RecF binds preferentially to single-stranded, linear DNA. It also seems to bind ATP. This is DNA replication and repair protein RecF from Geobacter sulfurreducens (strain ATCC 51573 / DSM 12127 / PCA).